A 357-amino-acid polypeptide reads, in one-letter code: Chorismate synthase (357 aa).

Residue Arg-46 coordinates NADP(+). FMN is bound by residues 123-125 (RSS), 235-236 (NA), Gly-275, 290-294 (KPTPS), and Arg-316.

Belongs to the chorismate synthase family. Homotetramer. Requires FMNH2 as cofactor.

The enzyme catalyses 5-O-(1-carboxyvinyl)-3-phosphoshikimate = chorismate + phosphate. Its pathway is metabolic intermediate biosynthesis; chorismate biosynthesis; chorismate from D-erythrose 4-phosphate and phosphoenolpyruvate: step 7/7. Its function is as follows. Catalyzes the anti-1,4-elimination of the C-3 phosphate and the C-6 proR hydrogen from 5-enolpyruvylshikimate-3-phosphate (EPSP) to yield chorismate, which is the branch point compound that serves as the starting substrate for the three terminal pathways of aromatic amino acid biosynthesis. This reaction introduces a second double bond into the aromatic ring system. In Sulfurovum sp. (strain NBC37-1), this protein is Chorismate synthase.